The following is a 438-amino-acid chain: Putative formin-like protein 21a (438 aa).

The segment at 1–74 is disordered; it reads MSPVEISGAD…RVLPRPPPPP (74 aa). Positions 22 to 61 are enriched in pro residues; it reads PLPPPPPPPPPPMRRRAPLPPPPPPPMRRRAPLPPPPPPA. The FH2 domain occupies 124–438; the sequence is FPCPSKKKSS…SYGYFDQPWI (315 aa).

It belongs to the formin-like family. Class-II subfamily.

This Arabidopsis thaliana (Mouse-ear cress) protein is Putative formin-like protein 21a (FH21A).